Reading from the N-terminus, the 175-residue chain is Apoptosis regulator Bcl-2 homolog (175 aa).

Residues 152-174 traverse the membrane as a helical segment; that stretch reads YYVTRYFRVAAFIITSLAVINLF.

As to quaternary structure, interacts with host BAK1 and BAX as well as other BH3-containing proteins including BIM, BID or PUMA.

It is found in the host membrane. Plays a role in the inhibition of host apoptosis. Interacts with host proapoptotic factors BAK1 and BAX to supposedly prevent their activation. The polypeptide is Apoptosis regulator Bcl-2 homolog (CNPV058) (Canarypox virus (CNPV)).